An 85-amino-acid chain; its full sequence is UPF0386 protein TM1040_0419 (85 aa).

Positions 62 to 85 (SKSSRPYQISEKGRRSVRAQLDNR) are disordered.

This sequence belongs to the UPF0386 family.

This chain is UPF0386 protein TM1040_0419, found in Ruegeria sp. (strain TM1040) (Silicibacter sp.).